Consider the following 68-residue polypeptide: Intracellular calcium channel modulator CCP-Ts (68 aa).

The signal sequence occupies residues 1 to 23 (MNPKLLIVIGLLLATGVCSFAKA). Cystine bridges form between C33–C47, C40–C53, and C46–C62.

This sequence belongs to the scorpion calcin-like family. In terms of tissue distribution, expressed by the venom gland. In intravenously injected mice, the labeled toxin has preference for heart, liver and lungs.

It is found in the secreted. It localises to the nucleus. Its function is as follows. Cell penetrating peptide (CPP) that increases intracellular calcium release through the activation of nuclear inositol 1,4,5-trisphosphate receptors (ITPR) of cardiomyocytes, thereby causing an increase in the contraction frequency of these cells. In vivo, this toxin is not lethal to mice, hovewer anti-CPP serum reduces venom lethality, suggesting that this toxin is lethal when it acts in synergy with other venom components. This Tityus serrulatus (Brazilian scorpion) protein is Intracellular calcium channel modulator CCP-Ts.